Reading from the N-terminus, the 80-residue chain is Small pacifastin protease inhibitor (80 aa).

The N-terminal stretch at 1–24 (MSKVLKVGLLLLLVAVAASAYAVA) is a signal peptide. Residues 25–47 (EENGAPKENKQLPQIDDYGVTNK) constitute a propeptide that is removed on maturation. The Pacifastin domain maps to 45–80 (TNKCPANQPFKWNCNYCTCGPEGKDASCTRMACPQH). 3 cysteine pairs are disulfide-bonded: Cys-48-Cys-63, Cys-58-Cys-77, and Cys-61-Cys-72.

It belongs to the protease inhibitor I19 family. Expressed in the venom apparatus. Low transcript levels are also detected in other tissues.

It is found in the secreted. Functionally, parasitic wasp protein that may interfere with the host immune response. The recombinant protein inhibits trypsin activity and prophenoloxidase (PPO) activation, an enzyme essential for both clotting and insect innate immune responses. It does not inhibit activity of chymotrypsin and protease K, and has no effect on phenoloxidase (PO) activity. The sequence is that of Small pacifastin protease inhibitor from Nasonia vitripennis (Parasitic wasp).